The primary structure comprises 365 residues: MSLTRLHIETFRNISSAQLHPSDGLNLIYGQNGSGKTSVLEAIYFLGMGRSFRSHLSQRVIQHQDDKLTLFANLSLGEQESKIGLRRFRSGETEVKINGDKIKRLSTLAETLPIQVITPESFSLLFEGPKSRRQFIDWGAFHSDKSFHSAWANVKRILKQRNQLLKNQVSYSQIQFWDKELVRYSELVTLIRKEYVDSLNEQLKGIIVEFLPQVEVKVSFTRGWDSKTDFGQLLETQYLRDVAAGNTGSGPHKADLRLRVGTLPVQDALSRGQLKLLVCALRIAQGKLLKQQTDKNSIYLVDDLPSELDAKHRQLLLQQLMDTGAQIFVTAIDPAAIVDSLTTPPSKMFHVEQGCVTVIDKPTRE.

30–37 (GQNGSGKT) is a binding site for ATP.

Belongs to the RecF family.

The protein resides in the cytoplasm. In terms of biological role, the RecF protein is involved in DNA metabolism; it is required for DNA replication and normal SOS inducibility. RecF binds preferentially to single-stranded, linear DNA. It also seems to bind ATP. The chain is DNA replication and repair protein RecF from Shewanella woodyi (strain ATCC 51908 / MS32).